Reading from the N-terminus, the 209-residue chain is tRNA (guanine-N(7)-)-methyltransferase (209 aa).

Positions 35, 60, 87, and 113 each coordinate S-adenosyl-L-methionine. The active site involves D113. Positions 117 and 149 each coordinate substrate.

It belongs to the class I-like SAM-binding methyltransferase superfamily. TrmB family.

The catalysed reaction is guanosine(46) in tRNA + S-adenosyl-L-methionine = N(7)-methylguanosine(46) in tRNA + S-adenosyl-L-homocysteine. It participates in tRNA modification; N(7)-methylguanine-tRNA biosynthesis. Its function is as follows. Catalyzes the formation of N(7)-methylguanine at position 46 (m7G46) in tRNA. The protein is tRNA (guanine-N(7)-)-methyltransferase of Prochlorococcus marinus subsp. pastoris (strain CCMP1986 / NIES-2087 / MED4).